The following is a 66-amino-acid chain: Ribosome biogenesis protein Nop10 (66 aa).

This sequence belongs to the NOP10 family.

Its function is as follows. Involved in ribosome biogenesis; more specifically in 18S rRNA pseudouridylation and in cleavage of pre-rRNA. The polypeptide is Ribosome biogenesis protein Nop10 (Staphylothermus marinus (strain ATCC 43588 / DSM 3639 / JCM 9404 / F1)).